The following is a 166-amino-acid chain: Deglycase PYRAB04690 (166 aa).

Residues 1-166 enclose the PfpI endopeptidase domain; that stretch reads MRVLILSADQ…WMREFVKLLK (166 aa). His-101 is an active-site residue.

Belongs to the peptidase C56 family. In terms of assembly, homohexamer formed by a dimer of trimers that assemble into a hollow ring structure.

Its subcellular location is the cytoplasm. The catalysed reaction is N(omega)-(1-hydroxy-2-oxopropyl)-L-arginyl-[protein] + H2O = lactate + L-arginyl-[protein] + H(+). It carries out the reaction N(6)-(1-hydroxy-2-oxopropyl)-L-lysyl-[protein] + H2O = lactate + L-lysyl-[protein] + H(+). The enzyme catalyses S-(1-hydroxy-2-oxopropyl)-L-cysteinyl-[protein] + H2O = lactate + L-cysteinyl-[protein] + H(+). It catalyses the reaction N(omega)-(1-hydroxy-2-oxoethyl)-L-arginyl-[protein] + H2O = L-arginyl-[protein] + glycolate + H(+). The catalysed reaction is N(6)-(1-hydroxy-2-oxoethyl)-L-lysyl-[protein] + H2O = glycolate + L-lysyl-[protein] + H(+). It carries out the reaction S-(1-hydroxy-2-oxoethyl)-L-cysteinyl-[protein] + H2O = glycolate + L-cysteinyl-[protein] + H(+). Deglycase that catalyzes the deglycation of the Maillard adducts formed between amino groups of proteins and reactive carbonyl groups of glyoxals. Thus, functions as a protein deglycase that repairs methylglyoxal- and glyoxal-glycated proteins, and releases repaired proteins and lactate or glycolate, respectively. Deglycates cysteine, arginine and lysine residues in proteins, and thus reactivates these proteins by reversing glycation by glyoxals. Acts on early glycation intermediates (hemithioacetals and aminocarbinols), preventing the formation of advanced glycation endproducts (AGE) that cause irreversible damage. Also displays proteolytic activity. The protein is Deglycase PYRAB04690 of Pyrococcus abyssi (strain GE5 / Orsay).